Here is a 275-residue protein sequence, read N- to C-terminus: tRNA pseudouridine synthase A (275 aa).

The active-site Nucleophile is the Asp56. Tyr110 is a substrate binding site.

The protein belongs to the tRNA pseudouridine synthase TruA family.

It carries out the reaction uridine(38/39/40) in tRNA = pseudouridine(38/39/40) in tRNA. Formation of pseudouridine at positions 38, 39 and 40 in the anticodon stem and loop of transfer RNAs. The sequence is that of tRNA pseudouridine synthase A from Haloarcula marismortui (strain ATCC 43049 / DSM 3752 / JCM 8966 / VKM B-1809) (Halobacterium marismortui).